The primary structure comprises 267 residues: 1-(5-phosphoribosyl)-5-[(5-phosphoribosylamino)methylideneamino] imidazole-4-carboxamide isomerase (267 aa).

This sequence belongs to the HisA/HisF family.

The protein localises to the cytoplasm. It catalyses the reaction 1-(5-phospho-beta-D-ribosyl)-5-[(5-phospho-beta-D-ribosylamino)methylideneamino]imidazole-4-carboxamide = 5-[(5-phospho-1-deoxy-D-ribulos-1-ylimino)methylamino]-1-(5-phospho-beta-D-ribosyl)imidazole-4-carboxamide. It functions in the pathway amino-acid biosynthesis; L-histidine biosynthesis; L-histidine from 5-phospho-alpha-D-ribose 1-diphosphate: step 4/9. The polypeptide is 1-(5-phosphoribosyl)-5-[(5-phosphoribosylamino)methylideneamino] imidazole-4-carboxamide isomerase (HIS6) (Kluyveromyces lactis (strain ATCC 8585 / CBS 2359 / DSM 70799 / NBRC 1267 / NRRL Y-1140 / WM37) (Yeast)).